Consider the following 218-residue polypeptide: Thiopurine S-methyltransferase (218 aa).

S-adenosyl-L-methionine is bound by residues Trp10, Leu45, Glu66, and Arg123.

This sequence belongs to the class I-like SAM-binding methyltransferase superfamily. TPMT family.

It is found in the cytoplasm. It carries out the reaction S-adenosyl-L-methionine + a thiopurine = S-adenosyl-L-homocysteine + a thiopurine S-methylether.. This chain is Thiopurine S-methyltransferase, found in Azotobacter vinelandii (strain DJ / ATCC BAA-1303).